A 122-amino-acid chain; its full sequence is Immunoglobulin lambda variable 4-3 (122 aa).

Positions 1–19 (MAWVSFYLLPFIFSTGLCA) are cleaved as a signal peptide. The tract at residues 20 to 44 (LPVLTQPPSASALLGASIKLTCTLS) is framework-1. Positions 21–122 (PVLTQPPSAS…ESHTIDGQVG (102 aa)) constitute an Ig-like domain. C41 and C111 form a disulfide bridge. A complementarity-determining-1 region spans residues 45 to 51 (SEHSTYT). Residues 52-68 (IEWYQQRPGRSPQYIMK) form a framework-2 region. Residues 69 to 75 (VKSDGSH) form a complementarity-determining-2 region. Residues 76–111 (SKGDGIPDRFMGSSSGADRYLTFSNLQSDDEAEYHC) form a framework-3 region. Residues 112–122 (GESHTIDGQVG) are complementarity-determining-3.

As to quaternary structure, immunoglobulins are composed of two identical heavy chains and two identical light chains; disulfide-linked.

The protein localises to the secreted. It is found in the cell membrane. Its function is as follows. V region of the variable domain of immunoglobulin light chains that participates in the antigen recognition. Immunoglobulins, also known as antibodies, are membrane-bound or secreted glycoproteins produced by B lymphocytes. In the recognition phase of humoral immunity, the membrane-bound immunoglobulins serve as receptors which, upon binding of a specific antigen, trigger the clonal expansion and differentiation of B lymphocytes into immunoglobulins-secreting plasma cells. Secreted immunoglobulins mediate the effector phase of humoral immunity, which results in the elimination of bound antigens. The antigen binding site is formed by the variable domain of one heavy chain, together with that of its associated light chain. Thus, each immunoglobulin has two antigen binding sites with remarkable affinity for a particular antigen. The variable domains are assembled by a process called V-(D)-J rearrangement and can then be subjected to somatic hypermutations which, after exposure to antigen and selection, allow affinity maturation for a particular antigen. This is Immunoglobulin lambda variable 4-3 from Homo sapiens (Human).